The following is a 311-amino-acid chain: Formimidoylglutamase (311 aa).

Mn(2+) contacts are provided by H130, D155, H157, D159, C242, and D244.

It belongs to the arginase family. Requires Mn(2+) as cofactor.

The catalysed reaction is N-formimidoyl-L-glutamate + H2O = formamide + L-glutamate. It participates in amino-acid degradation; L-histidine degradation into L-glutamate; L-glutamate from N-formimidoyl-L-glutamate (hydrolase route): step 1/1. Catalyzes the conversion of N-formimidoyl-L-glutamate to L-glutamate and formamide. This is Formimidoylglutamase from Staphylococcus aureus (strain MRSA252).